A 685-amino-acid chain; its full sequence is Pentatricopeptide repeat-containing protein At5g19020, mitochondrial (685 aa).

The N-terminal 23 residues, 1–23 (MIKLIRFFRSRRCWVISLQARCF), are a transit peptide targeting the mitochondrion. 17 PPR repeats span residues 40–74 (TERA…GLDS), 75–105 (NGYI…HAKL), 106–136 (DSAS…MPER), 137–171 (SCVS…GIML), 172–206 (NEVT…KLEG), 207–237 (RVFV…MPER), 238–268 (NLVT…ITEK), 269–303 (DIVS…GMKP), 304–338 (SEVM…GFDC), 339–369 (YDFL…SVKD), 370–400 (HIAS…THDK), 401–435 (DIFS…SQVK), 437–471 (DAIT…TIPP), 472–502 (NDNL…TKNI), 506–540 (TISP…PIKP), 541–576 (NSIT…GIEP), and 577–607 (DIKH…MPVK). The interval 612 to 685 (IWGMLLSASR…EWSRAFSGVV (74 aa)) is type E motif; degenerate.

Belongs to the PPR family. PCMP-E subfamily.

The protein localises to the mitochondrion. This chain is Pentatricopeptide repeat-containing protein At5g19020, mitochondrial (PCMP-E42), found in Arabidopsis thaliana (Mouse-ear cress).